The chain runs to 290 residues: 4-hydroxybenzoate octaprenyltransferase (290 aa).

Helical transmembrane passes span 23-43 (IGTE…SDGY), 46-66 (LKMF…GCAI), 96-116 (AIWV…FLPI), 118-138 (TFYW…MKRY), 141-161 (LPQV…YTAT), 169-189 (CWLL…QYAI), 212-232 (IPII…ALYI), 235-255 (LLFP…IYQW), and 265-285 (LCFW…LAIL).

The protein belongs to the UbiA prenyltransferase family. The cofactor is Mg(2+).

The protein localises to the cell inner membrane. It carries out the reaction all-trans-octaprenyl diphosphate + 4-hydroxybenzoate = 4-hydroxy-3-(all-trans-octaprenyl)benzoate + diphosphate. It participates in cofactor biosynthesis; ubiquinone biosynthesis. In terms of biological role, catalyzes the prenylation of para-hydroxybenzoate (PHB) with an all-trans polyprenyl group. Mediates the second step in the final reaction sequence of ubiquinone-8 (UQ-8) biosynthesis, which is the condensation of the polyisoprenoid side chain with PHB, generating the first membrane-bound Q intermediate 3-octaprenyl-4-hydroxybenzoate. The protein is 4-hydroxybenzoate octaprenyltransferase of Acinetobacter baylyi (strain ATCC 33305 / BD413 / ADP1).